Here is a 76-residue protein sequence, read N- to C-terminus: Sec-independent protein translocase protein TatA (76 aa).

A helical membrane pass occupies residues 1-21 (MLGGLTGWHLLIILAVILLLF). Positions 44–57 (VNEMKKDGDKDKGE) are enriched in basic and acidic residues. Positions 44 to 76 (VNEMKKDGDKDKGEGGSTAPATDTGASSEQNSK) are disordered. The segment covering 62 to 76 (APATDTGASSEQNSK) has biased composition (polar residues).

It belongs to the TatA/E family. In terms of assembly, the Tat system comprises two distinct complexes: a TatABC complex, containing multiple copies of TatA, TatB and TatC subunits, and a separate TatA complex, containing only TatA subunits. Substrates initially bind to the TatABC complex, which probably triggers association of the separate TatA complex to form the active translocon.

It localises to the cell membrane. In terms of biological role, part of the twin-arginine translocation (Tat) system that transports large folded proteins containing a characteristic twin-arginine motif in their signal peptide across membranes. TatA could form the protein-conducting channel of the Tat system. The chain is Sec-independent protein translocase protein TatA from Leifsonia xyli subsp. xyli (strain CTCB07).